A 130-amino-acid polypeptide reads, in one-letter code: Small ribosomal subunit protein uS9 (130 aa).

The protein belongs to the universal ribosomal protein uS9 family.

The polypeptide is Small ribosomal subunit protein uS9 (Thioalkalivibrio sulfidiphilus (strain HL-EbGR7)).